The chain runs to 602 residues: Probable HECT-type ubiquitin ligase-interacting protein creD (602 aa).

Disordered stretches follow at residues 375-398 (EVDPSGYRTPGPGSGPGTPFGALS) and 457-499 (TADY…MATP). Over residues 463–475 (PSSGSNSHSPASP) the composition is skewed to low complexity. Over residues 477 to 492 (LSRRPSDEGYRDHDHI) the composition is skewed to basic and acidic residues.

It belongs to the arrestin family. As to quaternary structure, interacts with hulA.

Functionally, component of the regulatory network controlling carbon source utilization through ubiquitination and deubiquitination involving creA, creB, creC, creD and acrB. May be involved in signaling by recognizing appropriately phosphorylated substrates via its arrestin domains and then recruit a HECT-type ubiquitin ligase such as hulA, leading to ubiquitination of the substrate, providing a link between ubiquitination and phosphorylation in protein regulation and stability. The protein is Probable HECT-type ubiquitin ligase-interacting protein creD (creD) of Aspergillus clavatus (strain ATCC 1007 / CBS 513.65 / DSM 816 / NCTC 3887 / NRRL 1 / QM 1276 / 107).